Consider the following 126-residue polypeptide: uncharacterized protein (126 aa).

One can recognise an HTH hxlR-type domain in the interval 20–118 (CPSREVLKHV…WIELNLPEVL (99 aa)).

This is an uncharacterized protein from Escherichia coli (strain K12).